A 222-amino-acid chain; its full sequence is Small ribosomal subunit protein uS3 (222 aa).

Residues Ile39–Lys109 enclose the KH type-2 domain.

Belongs to the universal ribosomal protein uS3 family. As to quaternary structure, part of the 30S ribosomal subunit. Forms a tight complex with proteins S10 and S14.

Binds the lower part of the 30S subunit head. Binds mRNA in the 70S ribosome, positioning it for translation. The polypeptide is Small ribosomal subunit protein uS3 (Clostridium tetani (strain Massachusetts / E88)).